The following is a 500-amino-acid chain: Hexose transporter 1 (500 aa).

The Cytoplasmic portion of the chain corresponds to 1–25 (MKNSNEISSSQSLKNNGSDGFFNTS). Residues 26–46 (LMYVLAACLASFLFGYQVSVL) form a helical membrane-spanning segment. Over 47 to 75 (NTIKDFIVIEFGWCAGKEVNCDDSTLKSS) the chain is Extracellular. The cysteines at positions 60 and 67 are disulfide-linked. Residues 76–96 (FLLASVFIGAVVGSGFSGFLV) form a helical membrane-spanning segment. The Cytoplasmic portion of the chain corresponds to 97–101 (QHGRR). A helical transmembrane segment spans residues 102–122 (FSLLVIYNFFILVSILTSITH). The Extracellular portion of the chain corresponds to 123–131 (HFHTILFSR). Residues 132-152 (LLSGFGIGLITVSVPMYISEM) traverse the membrane as a helical segment. Residues 153–166 (THKDKKGAYGVLHQ) lie on the Cytoplasmic side of the membrane. Residue Gln-166 participates in alpha-D-glucose binding. Gln-166 lines the beta-D-glucose pocket. A helical transmembrane segment spans residues 167 to 187 (LFITFGIFIAVLLGMAMGNVP). Residues 188 to 203 (EEVNNPLGTFQQIWWR) lie on the Extracellular side of the membrane. The chain crosses the membrane as a helical span at residues 204-224 (LMFFFPCIISILGIVLLTFFF). Residues 225 to 289 (KEETPYYLFE…RAMKIPSYRY (65 aa)) lie on the Cytoplasmic side of the membrane. A helical transmembrane segment spans residues 290–310 (VILLGCILSGLQQFTGINVLV). Residues Gln-301, Gln-302, and Asn-307 each coordinate alpha-D-glucose. Gln-301 lines the beta-D-glucose pocket. Asn-307 contributes to the beta-D-glucose binding site. The Extracellular portion of the chain corresponds to 311 to 327 (SNSNALYKGFLTNEWIT). A helical membrane pass occupies residues 328–348 (TLSVIMTVVNFLMTFPAIYIV). Beta-D-glucose is bound at residue Asn-337. At 349–356 (EKLGRKTL) the chain is on the cytoplasmic side. The chain crosses the membrane as a helical span at residues 357-377 (LLCGCAGIVCAFLPTAIANLI). Residues 378-390 (NNTSDVVKKLSIS) are Extracellular-facing. The helical transmembrane segment at 391-411 (ATFVMIVSFAVSYGPVLWIYL) threads the bilayer. Residue Trp-408 participates in alpha-D-glucose binding. Topologically, residues 412-425 (HEMFPSEIKDSAAS) are cytoplasmic. Residues 426 to 446 (LASLVNWMCAIIVVFPSDIII) form a helical membrane-spanning segment. Over 447 to 451 (KQSPT) the chain is Extracellular. A helical transmembrane segment spans residues 452–472 (ILFFIFSGMSIVAFLFIFFFI). Topologically, residues 473–500 (KETKGGEIGTSPYITLEERQKHMGKSVV) are cytoplasmic.

Belongs to the major facilitator superfamily. Sugar transporter (TC 2.A.1.1) family. In terms of assembly, homodimer.

The protein localises to the cell membrane. It catalyses the reaction D-glucose(out) = D-glucose(in). The enzyme catalyses D-fructose(out) = D-fructose(in). It carries out the reaction D-galactose(in) = D-galactose(out). The catalysed reaction is D-mannose(out) = D-mannose(in). It catalyses the reaction D-glucosamine(out) = D-glucosamine(in). The enzyme catalyses D-xylose(out) = D-xylose(in). Inhibited by cytochalasin B. In terms of biological role, sodium-independent facilitative hexose transporter. Can transport D-glucose and D-fructose. Can transport D-mannose, D-galactose, D-xylose and D-glucosamine. This Plasmodium knowlesi protein is Hexose transporter 1.